The chain runs to 1223 residues: Kinesin-like protein costa (1223 aa).

Residues 4–394 enclose the Kinesin motor domain; it reads PIQVAVRICP…LQFAFKVQCV (391 aa). The segment at 13-90 is disordered; sequence PYTEPSENRK…LPTDSNGNEN (78 aa). A compositionally biased stretch (basic and acidic residues) spans 39-62; that stretch reads AKAESFSDSEDNKNDASNRQRPEE. 178–185 is an ATP binding site; it reads GQRGQGKT. 3 disordered regions span residues 494–528, 560–604, and 625–646; these read RSQK…ESQR, KHPK…SIQP, and TAQP…ESSA. The span at 569-593 shows a compositional bias: basic and acidic residues; that stretch reads QERDKESKLDAPPEKDKEKIEERKT. 3 coiled-coil regions span residues 658 to 743, 773 to 825, and 982 to 1015; these read AAAN…QGRE, ESGQ…GASG, and NKVI…ERVL. The disordered stretch occupies residues 774–799; it reads SGQKLKKLQQSMAESRKQQEELEKKI. The span at 787 to 799 shows a compositional bias: basic and acidic residues; sequence ESRKQQEELEKKI. The span at 1162–1178 shows a compositional bias: low complexity; the sequence is TTTATATTTTTTTTTTT. The segment at 1162-1188 is disordered; it reads TTTATATTTTTTTTTTTGGKGKERGLP.

The protein belongs to the TRAFAC class myosin-kinesin ATPase superfamily. Kinesin family. KIF27 subfamily. In terms of assembly, homodimer (Potential). Binds microtubules. Interacts with ci, smo, sgg, CkIalpha and protein kinase A catalytic subunit.

Its subcellular location is the cytoplasm. It is found in the cytoskeleton. Functionally, regulates cubitus interruptus (ci) processing by recruiting multiple kinases to promote its efficient phosphorylation. Scaffolds multiple kinases and ci into proximity to promote its hyperphosphorylation, which then targets it for SCFSlimb/proteasome-mediated processing to generate its repressor form. Hh signaling inhibits ci phosphorylation by interfering with the cos-ci-kinases complex formation. This chain is Kinesin-like protein costa (cos), found in Drosophila pseudoobscura pseudoobscura (Fruit fly).